We begin with the raw amino-acid sequence, 211 residues long: FMN-dependent NADH:quinone oxidoreductase (211 aa).

FMN is bound by residues 17-19 and 99-102; these read SYS and MWNF.

Belongs to the azoreductase type 1 family. In terms of assembly, homodimer. It depends on FMN as a cofactor.

The enzyme catalyses 2 a quinone + NADH + H(+) = 2 a 1,4-benzosemiquinone + NAD(+). It catalyses the reaction N,N-dimethyl-1,4-phenylenediamine + anthranilate + 2 NAD(+) = 2-(4-dimethylaminophenyl)diazenylbenzoate + 2 NADH + 2 H(+). Quinone reductase that provides resistance to thiol-specific stress caused by electrophilic quinones. In terms of biological role, also exhibits azoreductase activity. Catalyzes the reductive cleavage of the azo bond in aromatic azo compounds to the corresponding amines. The sequence is that of FMN-dependent NADH:quinone oxidoreductase from Exiguobacterium sp. (strain ATCC BAA-1283 / AT1b).